Here is a 352-residue protein sequence, read N- to C-terminus: Farnesyl pyrophosphate synthase (352 aa).

Isopentenyl diphosphate contacts are provided by lysine 52, arginine 55, and glutamine 93. The Mg(2+) site is built by aspartate 100 and aspartate 104. Residue arginine 109 participates in dimethylallyl diphosphate binding. Arginine 110 lines the isopentenyl diphosphate pocket. Residues lysine 197, threonine 198, glutamine 237, lysine 254, and lysine 263 each contribute to the dimethylallyl diphosphate site.

The protein belongs to the FPP/GGPP synthase family. Requires Mg(2+) as cofactor.

It carries out the reaction isopentenyl diphosphate + dimethylallyl diphosphate = (2E)-geranyl diphosphate + diphosphate. The catalysed reaction is isopentenyl diphosphate + (2E)-geranyl diphosphate = (2E,6E)-farnesyl diphosphate + diphosphate. It functions in the pathway isoprenoid biosynthesis; farnesyl diphosphate biosynthesis; farnesyl diphosphate from geranyl diphosphate and isopentenyl diphosphate: step 1/1. It participates in isoprenoid biosynthesis; geranyl diphosphate biosynthesis; geranyl diphosphate from dimethylallyl diphosphate and isopentenyl diphosphate: step 1/1. Its function is as follows. Farnesyl pyrophosphate synthase; part of the second module of ergosterol biosynthesis pathway that includes the middle steps of the pathway. ERG20 catalyzes the sequential condensation of isopentenyl pyrophosphate with dimethylallyl pyrophosphate, and then with the resultant geranylpyrophosphate to the ultimate product farnesyl pyrophosphate. The second module is carried out in the vacuole and involves the formation of farnesyl diphosphate, which is also an important intermediate in the biosynthesis of ubiquinone, dolichol, heme and prenylated proteins. Activity by the mevalonate kinase ERG12 first converts mevalonate into 5-phosphomevalonate. 5-phosphomevalonate is then further converted to 5-diphosphomevalonate by the phosphomevalonate kinase ERG8. The diphosphomevalonate decarboxylase MVD1/ERG19 then produces isopentenyl diphosphate. The isopentenyl-diphosphate delta-isomerase IDI1 then catalyzes the 1,3-allylic rearrangement of the homoallylic substrate isopentenyl (IPP) to its highly electrophilic allylic isomer, dimethylallyl diphosphate (DMAPP). Finally the farnesyl diphosphate synthase ERG20 catalyzes the sequential condensation of isopentenyl pyrophosphate with dimethylallyl pyrophosphate, and then with the resultant geranylpyrophosphate to the ultimate product farnesyl pyrophosphate. In Saccharomyces cerevisiae (strain ATCC 204508 / S288c) (Baker's yeast), this protein is Farnesyl pyrophosphate synthase (ERG20).